Reading from the N-terminus, the 393-residue chain is S-adenosylmethionine synthase 2 (393 aa).

A Mg(2+)-binding site is contributed by Glu-9. An ATP-binding site is contributed by His-15. A K(+)-binding site is contributed by Glu-43. Residues Glu-56 and Gln-99 each coordinate L-methionine. ATP is bound by residues 167–169, 235–238, Asp-246, 252–253, Ala-269, Lys-273, and Lys-277; these read DGK, SGRF, and RK. Residue Asp-246 participates in L-methionine binding. Lys-277 is an L-methionine binding site.

This sequence belongs to the AdoMet synthase family. Homotetramer. The cofactor is Mn(2+). Mg(2+) is required as a cofactor. It depends on Co(2+) as a cofactor. Requires K(+) as cofactor. As to expression, roots and shoots.

It localises to the cytoplasm. It carries out the reaction L-methionine + ATP + H2O = S-adenosyl-L-methionine + phosphate + diphosphate. It participates in amino-acid biosynthesis; S-adenosyl-L-methionine biosynthesis; S-adenosyl-L-methionine from L-methionine: step 1/1. Catalyzes the formation of S-adenosylmethionine from methionine and ATP. The reaction comprises two steps that are both catalyzed by the same enzyme: formation of S-adenosylmethionine (AdoMet) and triphosphate, and subsequent hydrolysis of the triphosphate. The sequence is that of S-adenosylmethionine synthase 2 (SAMS2) from Pinus contorta (Shore pine).